A 177-amino-acid chain; its full sequence is Probable DNA-directed RNA polymerase subunit delta (177 aa).

One can recognise an HTH HARE-type domain in the interval 14 to 81; that stretch reads CSMIEVVHSV…GENRWGLRSW (68 aa). A disordered region spans residues 90 to 177; sequence EILPQPKPKK…ETEEEEEEEL (88 aa). The span at 106–177 shows a compositional bias: acidic residues; the sequence is DGFDDYIEED…ETEEEEEEEL (72 aa).

It belongs to the RpoE family. In terms of assembly, RNAP is composed of a core of 2 alpha, a beta and a beta' subunits. The core is associated with a delta subunit and one of several sigma factors.

In terms of biological role, participates in both the initiation and recycling phases of transcription. In the presence of the delta subunit, RNAP displays an increased specificity of transcription, a decreased affinity for nucleic acids, and an increased efficiency of RNA synthesis because of enhanced recycling. In Bacillus cereus (strain B4264), this protein is Probable DNA-directed RNA polymerase subunit delta.